Here is a 182-residue protein sequence, read N- to C-terminus: Probable phosphoheptose isomerase (182 aa).

The SIS domain occupies 29 to 182 (ISSAISSGNK…MICAMIDEKF (154 aa)). Residue 44 to 46 (NGG) participates in substrate binding. Residues His53 and Glu57 each coordinate Zn(2+). Substrate is bound by residues Glu57, 86–87 (ND), 112–114 (STS), Ser117, and Gln164. Positions 164 and 172 each coordinate Zn(2+).

It belongs to the SIS family. GmhA subfamily. It depends on Zn(2+) as a cofactor.

The protein localises to the cytoplasm. It catalyses the reaction 2 D-sedoheptulose 7-phosphate = D-glycero-alpha-D-manno-heptose 7-phosphate + D-glycero-beta-D-manno-heptose 7-phosphate. It participates in carbohydrate biosynthesis; D-glycero-D-manno-heptose 7-phosphate biosynthesis; D-glycero-alpha-D-manno-heptose 7-phosphate and D-glycero-beta-D-manno-heptose 7-phosphate from sedoheptulose 7-phosphate: step 1/1. Functionally, catalyzes the isomerization of sedoheptulose 7-phosphate in D-glycero-D-manno-heptose 7-phosphate. The sequence is that of Probable phosphoheptose isomerase from Thermoplasma acidophilum (strain ATCC 25905 / DSM 1728 / JCM 9062 / NBRC 15155 / AMRC-C165).